The following is a 145-amino-acid chain: D-aminoacyl-tRNA deacylase (145 aa).

The Gly-cisPro motif, important for rejection of L-amino acids signature appears at 137-138 (GP).

It belongs to the DTD family. Homodimer.

Its subcellular location is the cytoplasm. It carries out the reaction glycyl-tRNA(Ala) + H2O = tRNA(Ala) + glycine + H(+). It catalyses the reaction a D-aminoacyl-tRNA + H2O = a tRNA + a D-alpha-amino acid + H(+). An aminoacyl-tRNA editing enzyme that deacylates mischarged D-aminoacyl-tRNAs. Also deacylates mischarged glycyl-tRNA(Ala), protecting cells against glycine mischarging by AlaRS. Acts via tRNA-based rather than protein-based catalysis; rejects L-amino acids rather than detecting D-amino acids in the active site. By recycling D-aminoacyl-tRNA to D-amino acids and free tRNA molecules, this enzyme counteracts the toxicity associated with the formation of D-aminoacyl-tRNA entities in vivo and helps enforce protein L-homochirality. This chain is D-aminoacyl-tRNA deacylase, found in Klebsiella pneumoniae subsp. pneumoniae (strain ATCC 700721 / MGH 78578).